The sequence spans 120 residues: Nascent polypeptide-associated complex protein (120 aa).

The region spanning 12–80 (GMNPAKMKQM…VKEVPKSLEI (69 aa)) is the NAC-A/B domain.

The protein belongs to the NAC-alpha family. In terms of assembly, homodimer. Interacts with the ribosome. Binds ribosomal RNA.

Functionally, contacts the emerging nascent chain on the ribosome. This Methanosarcina mazei (strain ATCC BAA-159 / DSM 3647 / Goe1 / Go1 / JCM 11833 / OCM 88) (Methanosarcina frisia) protein is Nascent polypeptide-associated complex protein.